Here is a 112-residue protein sequence, read N- to C-terminus: Larval cuticle protein III/IV (112 aa).

The signal sequence occupies residues 1 to 16 (MFKILLVCALAALVAA). Residues 31-92 (PDGFKTVVSL…PSSDLLPVAP (62 aa)) enclose the Chitin-binding type R&amp;R domain.

Component of the larval cuticle. This chain is Larval cuticle protein III/IV (Lcp3), found in Drosophila miranda (Fruit fly).